Consider the following 35-residue polypeptide: Potassium channel toxin alpha-KTx 6.12 (35 aa).

Q1 carries the post-translational modification Pyrrolidone carboxylic acid. Disulfide bonds link C4/C24, C10/C29, C14/C31, and C19/C34. A Lysine amide modification is found at K35.

It belongs to the short scorpion toxin superfamily. Potassium channel inhibitor family. Alpha-KTx 06 subfamily. In terms of assembly, monomer. Expressed by the venom gland.

Its subcellular location is the secreted. Its function is as follows. High affinity blocker of Kv1.3/KCNA3 channels of human T cells. Blocks Kv1.2/KCNA2 with an order of magnitude smaller than for Kv1.3/KCNA3. The chain is Potassium channel toxin alpha-KTx 6.12 from Anuroctonus phaiodactylus (Mafia scorpion).